Reading from the N-terminus, the 336-residue chain is tRNA N6-adenosine threonylcarbamoyltransferase (336 aa).

Residues histidine 112 and histidine 116 each coordinate Fe cation. Substrate is bound by residues 136 to 140 (LVSGG), aspartate 169, glycine 182, and asparagine 276. A Fe cation-binding site is contributed by aspartate 304.

The protein belongs to the KAE1 / TsaD family. The cofactor is Fe(2+).

It is found in the cytoplasm. It carries out the reaction L-threonylcarbamoyladenylate + adenosine(37) in tRNA = N(6)-L-threonylcarbamoyladenosine(37) in tRNA + AMP + H(+). Its function is as follows. Required for the formation of a threonylcarbamoyl group on adenosine at position 37 (t(6)A37) in tRNAs that read codons beginning with adenine. Is involved in the transfer of the threonylcarbamoyl moiety of threonylcarbamoyl-AMP (TC-AMP) to the N6 group of A37, together with TsaE and TsaB. TsaD likely plays a direct catalytic role in this reaction. The protein is tRNA N6-adenosine threonylcarbamoyltransferase of Francisella philomiragia subsp. philomiragia (strain ATCC 25017 / CCUG 19701 / FSC 153 / O#319-036).